The sequence spans 138 residues: Transcription antitermination protein NusB (138 aa).

It belongs to the NusB family.

Involved in transcription antitermination. Required for transcription of ribosomal RNA (rRNA) genes. Binds specifically to the boxA antiterminator sequence of the ribosomal RNA (rrn) operons. This is Transcription antitermination protein NusB from Tolumonas auensis (strain DSM 9187 / NBRC 110442 / TA 4).